We begin with the raw amino-acid sequence, 592 residues long: Condensin-2 complex subunit H2 (592 aa).

2 disordered regions span residues Asn-89–Glu-116 and Glu-261–Leu-285. Over residues Gly-96–Ser-108 the composition is skewed to polar residues.

Belongs to the CND2 H2 (condensin-2 subunit 2) family. As to quaternary structure, component of the condensin-2 complex, which contains the smc2 and smc4 heterodimer, and three non SMC subunits, ncapg2, ncaph2 and ncapd3 that probably regulate the complex.

The protein resides in the nucleus. Regulatory subunit of the condensin-2 complex, a complex that seems to provide chromosomes with an additional level of organization and rigidity and in establishing mitotic chromosome architecture. This Danio rerio (Zebrafish) protein is Condensin-2 complex subunit H2 (ncaph2).